The primary structure comprises 348 residues: UDP-rhamnose/UDP-galactose transporter 2 (348 aa).

10 helical membrane passes run 12–32 (AVSD…IIMA), 44–64 (FSFA…VGMV), 81–101 (LLWF…SLML), 104–124 (VGFY…MEWV), 133–153 (EVKA…VTDV), 160–180 (FICA…IGSL), 196–216 (APIQ…FLSG), 230–250 (LCIL…YLCI), 257–277 (SFQV…WLIF), and 286–306 (IAGM…VELE).

It belongs to the TPT transporter family. TPT (TC 2.A.7.9) subfamily.

The protein resides in the golgi apparatus membrane. Its function is as follows. Nucleotide-sugar transporter that transports UDP-rhamnose or UDP-galactose and UMP in a strict counter-exchange mode. The protein is UDP-rhamnose/UDP-galactose transporter 2 of Arabidopsis thaliana (Mouse-ear cress).